The sequence spans 59 residues: Large ribosomal subunit protein uL30 (59 aa).

The protein belongs to the universal ribosomal protein uL30 family. As to quaternary structure, part of the 50S ribosomal subunit.

The polypeptide is Large ribosomal subunit protein uL30 (Histophilus somni (strain 129Pt) (Haemophilus somnus)).